The chain runs to 233 residues: Adenylyl cyclase-associated protein 1 (233 aa).

Y14 is modified (phosphotyrosine). S17 bears the Phosphoserine mark. 2 disordered regions span residues 43-71 and 91-129; these read VDKX…PSAL and DEKT…KPVT. Residues 53 to 64 show a composition bias toward low complexity; the sequence is LSGLPSGPSAGS. K101 carries the post-translational modification N6-methyllysine. Residues S104, S115, S122, and S124 each carry the phosphoserine modification. K151 is covalently cross-linked (Glycyl lysine isopeptide (Lys-Gly) (interchain with G-Cter in SUMO1)). A C-CAP/cofactor C-like domain is found at 173–221; the sequence is VPXISINKXDGRHIYLSKNSLDCEIVSAKSSEMNVLIPTEGGDFNEFPV.

The protein belongs to the CAP family. In terms of assembly, homodimer. Binds actin monomers.

It is found in the cell membrane. Directly regulates filament dynamics and has been implicated in a number of complex developmental and morphological processes, including mRNA localization and the establishment of cell polarity. This is Adenylyl cyclase-associated protein 1 (CAP1) from Sus scrofa (Pig).